A 428-amino-acid chain; its full sequence is Serine--tRNA ligase (428 aa).

231–233 (TSE) lines the L-serine pocket. ATP is bound by residues 262-264 (RRE) and Val-278. An L-serine-binding site is contributed by Glu-285. Position 349-352 (349-352 (ELTS)) interacts with ATP. Thr-384 is a binding site for L-serine.

The protein belongs to the class-II aminoacyl-tRNA synthetase family. Type-1 seryl-tRNA synthetase subfamily. As to quaternary structure, homodimer. The tRNA molecule binds across the dimer.

The protein localises to the cytoplasm. The catalysed reaction is tRNA(Ser) + L-serine + ATP = L-seryl-tRNA(Ser) + AMP + diphosphate + H(+). The enzyme catalyses tRNA(Sec) + L-serine + ATP = L-seryl-tRNA(Sec) + AMP + diphosphate + H(+). It functions in the pathway aminoacyl-tRNA biosynthesis; selenocysteinyl-tRNA(Sec) biosynthesis; L-seryl-tRNA(Sec) from L-serine and tRNA(Sec): step 1/1. Its function is as follows. Catalyzes the attachment of serine to tRNA(Ser). Is also able to aminoacylate tRNA(Sec) with serine, to form the misacylated tRNA L-seryl-tRNA(Sec), which will be further converted into selenocysteinyl-tRNA(Sec). The chain is Serine--tRNA ligase from Bifidobacterium longum subsp. infantis (strain ATCC 15697 / DSM 20088 / JCM 1222 / NCTC 11817 / S12).